We begin with the raw amino-acid sequence, 260 residues long: Hydroxyethylthiazole kinase 1 (260 aa).

Met-39 contributes to the substrate binding site. 2 residues coordinate ATP: Arg-115 and Thr-160. Gly-187 serves as a coordination point for substrate.

The protein belongs to the Thz kinase family. Mg(2+) serves as cofactor.

The catalysed reaction is 5-(2-hydroxyethyl)-4-methylthiazole + ATP = 4-methyl-5-(2-phosphooxyethyl)-thiazole + ADP + H(+). It functions in the pathway cofactor biosynthesis; thiamine diphosphate biosynthesis; 4-methyl-5-(2-phosphoethyl)-thiazole from 5-(2-hydroxyethyl)-4-methylthiazole: step 1/1. In terms of biological role, catalyzes the phosphorylation of the hydroxyl group of 4-methyl-5-beta-hydroxyethylthiazole (THZ). The chain is Hydroxyethylthiazole kinase 1 from Streptococcus pneumoniae serotype 19F (strain G54).